The primary structure comprises 556 residues: Endoglucanase 22 (556 aa).

A signal peptide spans Met-1–Ala-33. The Nucleophile role is filled by Asp-108. Catalysis depends on residues His-450, Asp-502, and Glu-511.

It belongs to the glycosyl hydrolase 9 (cellulase E) family.

It is found in the secreted. The enzyme catalyses Endohydrolysis of (1-&gt;4)-beta-D-glucosidic linkages in cellulose, lichenin and cereal beta-D-glucans.. The protein is Endoglucanase 22 (GLU11) of Oryza sativa subsp. japonica (Rice).